The sequence spans 383 residues: WAT1-related protein At3g18200 (383 aa).

Over residues 1–16 the composition is skewed to basic residues; that stretch reads MCYQTSKKKRRSRKRR. A disordered region spans residues 1-23; sequence MCYQTSKKKRRSRKRRAQEEKEK. 10 helical membrane passes run 33–53, 65–85, 91–111, 126–146, 158–178, 204–224, 237–257, 272–292, 300–320, and 325–345; these read VKLVVALITLQFCFAGFHIVS, VYPVYRNLLALLLIGPFAYFF, PPLTISLLAQFFFLALIGITA, TFASAMQNSVPAITFIMACAL, GVAKVLGTLVSIGGATVITLY, LTLGWLYLMGHCLSWAGWMVL, TLTSFTCFFGLIQFLVIALFV, LFTILYAGIIASGLVVYLQTW, VFVAVFQPLQTLLVAAMAFLI, and LYSGGIVGAVFIMLGLYLVLW. EamA domains follow at residues 44–173 and 216–344; these read FCFA…GGAT and LSWA…YLVL.

The protein belongs to the drug/metabolite transporter (DMT) superfamily. Plant drug/metabolite exporter (P-DME) (TC 2.A.7.4) family.

It is found in the membrane. This chain is WAT1-related protein At3g18200, found in Arabidopsis thaliana (Mouse-ear cress).